The following is a 323-amino-acid chain: Beta-ketoacyl-[acyl-carrier-protein] synthase III (323 aa).

Residues cysteine 114 and histidine 250 contribute to the active site. Residues glutamine 251 to arginine 255 form an ACP-binding region. Asparagine 280 is an active-site residue.

The protein belongs to the thiolase-like superfamily. FabH family. As to quaternary structure, homodimer.

Its subcellular location is the cytoplasm. It catalyses the reaction malonyl-[ACP] + acetyl-CoA + H(+) = 3-oxobutanoyl-[ACP] + CO2 + CoA. The protein operates within lipid metabolism; fatty acid biosynthesis. Its function is as follows. Catalyzes the condensation reaction of fatty acid synthesis by the addition to an acyl acceptor of two carbons from malonyl-ACP. Catalyzes the first condensation reaction which initiates fatty acid synthesis and may therefore play a role in governing the total rate of fatty acid production. Possesses both acetoacetyl-ACP synthase and acetyl transacylase activities. Its substrate specificity determines the biosynthesis of branched-chain and/or straight-chain of fatty acids. This chain is Beta-ketoacyl-[acyl-carrier-protein] synthase III, found in Rhodospirillum centenum (strain ATCC 51521 / SW).